Here is a 168-residue protein sequence, read N- to C-terminus: uncharacterized protein (168 aa).

2 helical membrane-spanning segments follow: residues 27 to 47 (NWLV…RISG) and 147 to 167 (IENG…QVMF).

Its subcellular location is the membrane. This is an uncharacterized protein from Saccharomyces cerevisiae (strain ATCC 204508 / S288c) (Baker's yeast).